The following is a 298-amino-acid chain: Thymidylate synthase (298 aa).

DUMP is bound by residues Arg-25 and Arg-159–Arg-160. Residue Cys-179 is the Nucleophile of the active site. DUMP-binding positions include Arg-200 to Asp-203, Asn-211, and His-241 to Tyr-243. A (6R)-5,10-methylene-5,6,7,8-tetrahydrofolate-binding site is contributed by Asp-203. Ala-297 contributes to the (6R)-5,10-methylene-5,6,7,8-tetrahydrofolate binding site.

The protein belongs to the thymidylate synthase family. Bacterial-type ThyA subfamily. Homodimer.

The protein resides in the cytoplasm. The catalysed reaction is dUMP + (6R)-5,10-methylene-5,6,7,8-tetrahydrofolate = 7,8-dihydrofolate + dTMP. Its pathway is pyrimidine metabolism; dTTP biosynthesis. In terms of biological role, catalyzes the reductive methylation of 2'-deoxyuridine-5'-monophosphate (dUMP) to 2'-deoxythymidine-5'-monophosphate (dTMP) while utilizing 5,10-methylenetetrahydrofolate (mTHF) as the methyl donor and reductant in the reaction, yielding dihydrofolate (DHF) as a by-product. This enzymatic reaction provides an intracellular de novo source of dTMP, an essential precursor for DNA biosynthesis. The sequence is that of Thymidylate synthase from Cereibacter sphaeroides (strain ATCC 17023 / DSM 158 / JCM 6121 / CCUG 31486 / LMG 2827 / NBRC 12203 / NCIMB 8253 / ATH 2.4.1.) (Rhodobacter sphaeroides).